The chain runs to 248 residues: MNATVHDLDGGDAGSVELPAIFETAFRPDLIGRAVSAAQANRKQAYGADEFAGLRTPAESFGSGRGLAHIPRSENVARRVPNAVSGRAAHPPKAEKDQTKSLNDKERQLAIRSAIAATADAETVAERGHAFDEDLDLPLVVSDEFEDLNKTQEALGVLEAVGADADIERAEEGRSVRAGRGKTRGRKYSQPKSVLVVTSEEPSRAARNLSGVDVATAREVNAEDLAPGAHPGRLTLWTESAIEEVADR.

Disordered stretches follow at residues 72–103 (RSEN…KSLN) and 173–210 (GRSV…RNLS). Over residues 92–103 (PKAEKDQTKSLN) the composition is skewed to basic and acidic residues. The segment covering 177 to 189 (RAGRGKTRGRKYS) has biased composition (basic residues).

This sequence belongs to the universal ribosomal protein uL4 family. Part of the 50S ribosomal subunit.

One of the primary rRNA binding proteins, this protein initially binds near the 5'-end of the 23S rRNA. It is important during the early stages of 50S assembly. It makes multiple contacts with different domains of the 23S rRNA in the assembled 50S subunit and ribosome. Functionally, forms part of the polypeptide exit tunnel. This Halorubrum lacusprofundi (strain ATCC 49239 / DSM 5036 / JCM 8891 / ACAM 34) protein is Large ribosomal subunit protein uL4.